The following is a 219-amino-acid chain: MSKHLAITKFRPANWLQKAGYAPQVFLFRNLESGQVLYSQFPTFSWKQIDTNFQRPNWENKKPSTRRDIWKCMAVVDLPDYDKSVKVYQNLCRLRYLRDVTFSKQAKDMRKKNESGHTWYSSQYRPTYSQEAVADLRECLLKLKDVQSSIKVHWEDEWRMGDKEKYWNPVLPELNHTTLERLGNVSREESAILKELGERAKEEFARVRQQESAAQNISL.

The protein belongs to the mitochondrion-specific ribosomal protein mL67 family.

Its subcellular location is the nucleus. It localises to the mitochondrion. Functionally, transcription factor involved in regulation of RNA polymerase II-dependent transcription. Also involved in regulation of mitochondrial DNA recombination, maintenance and repair, and generation of homoplasmic cells. This is Large ribosomal subunit protein mL67 (MHR1) from Kluyveromyces lactis (strain ATCC 8585 / CBS 2359 / DSM 70799 / NBRC 1267 / NRRL Y-1140 / WM37) (Yeast).